The sequence spans 555 residues: Sulfite reductase [ferredoxin] 1 (555 aa).

The segment at residues 69 to 161 (YTQREQGYDG…SVGLQTTEAC (93 aa)) is a cross-link (3'-(S-cysteinyl)-tyrosine (Tyr-Cys)). The [4Fe-4S] cluster site is built by Cys417, Cys423, Cys463, and Cys467. Cys467 lines the siroheme pocket.

The protein belongs to the nitrite and sulfite reductase 4Fe-4S domain family. In terms of assembly, monomer. Siroheme serves as cofactor. [4Fe-4S] cluster is required as a cofactor.

It catalyses the reaction hydrogen sulfide + 6 oxidized [2Fe-2S]-[ferredoxin] + 3 H2O = sulfite + 6 reduced [2Fe-2S]-[ferredoxin] + 7 H(+). Functionally, catalyzes the reduction of sulfite to sulfide, a step in the biosynthesis of sulfur-containing amino acids and cofactors. The protein is Sulfite reductase [ferredoxin] 1 (sir1) of Mycolicibacterium paratuberculosis (strain ATCC BAA-968 / K-10) (Mycobacterium paratuberculosis).